The sequence spans 846 residues: Translation initiation factor IF-2 (846 aa).

A disordered region spans residues 198-219; that stretch reads YKREEEEKKSKAKKAGGKGFKK. Basic residues predominate over residues 207–219; the sequence is SKAKKAGGKGFKK. The region spanning 345–512 is the tr-type G domain; that stretch reads SRAPVVTIMG…AVLLQSEVLE (168 aa). Residues 354–361 are G1; that stretch reads GHVDHGKT. 354–361 serves as a coordination point for GTP; that stretch reads GHVDHGKT. Positions 379-383 are G2; that stretch reads GITQH. A G3 region spans residues 400-403; that stretch reads DTPG. Residues 400–404 and 454–457 each bind GTP; these read DTPGH and NKID. Residues 454-457 are G4; it reads NKID. Residues 490 to 492 are G5; it reads SAK.

It belongs to the TRAFAC class translation factor GTPase superfamily. Classic translation factor GTPase family. IF-2 subfamily.

Its subcellular location is the cytoplasm. Its function is as follows. One of the essential components for the initiation of protein synthesis. Protects formylmethionyl-tRNA from spontaneous hydrolysis and promotes its binding to the 30S ribosomal subunits. Also involved in the hydrolysis of GTP during the formation of the 70S ribosomal complex. The chain is Translation initiation factor IF-2 from Francisella tularensis subsp. novicida (strain U112).